Reading from the N-terminus, the 353-residue chain is Thiamine-phosphate synthase (353 aa).

The segment at 1-128 (MKSMPVAPIA…AASAAAIRYG (128 aa)) is unknown. The thiamine-phosphate synthase stretch occupies residues 129–353 (LYDLEVTVLQ…TSLQLLEALR (225 aa)). 4-amino-2-methyl-5-(diphosphooxymethyl)pyrimidine is bound by residues 185 to 189 (QYRNK) and Asn217. Mg(2+)-binding residues include Asp218 and Asp237. Ser256 lines the 4-amino-2-methyl-5-(diphosphooxymethyl)pyrimidine pocket. 282–284 (TAT) lines the 2-[(2R,5Z)-2-carboxy-4-methylthiazol-5(2H)-ylidene]ethyl phosphate pocket. Position 285 (Lys285) interacts with 4-amino-2-methyl-5-(diphosphooxymethyl)pyrimidine. Gly312 is a 2-[(2R,5Z)-2-carboxy-4-methylthiazol-5(2H)-ylidene]ethyl phosphate binding site.

This sequence belongs to the thiamine-phosphate synthase family. It depends on Mg(2+) as a cofactor.

It carries out the reaction 2-[(2R,5Z)-2-carboxy-4-methylthiazol-5(2H)-ylidene]ethyl phosphate + 4-amino-2-methyl-5-(diphosphooxymethyl)pyrimidine + 2 H(+) = thiamine phosphate + CO2 + diphosphate. The enzyme catalyses 2-(2-carboxy-4-methylthiazol-5-yl)ethyl phosphate + 4-amino-2-methyl-5-(diphosphooxymethyl)pyrimidine + 2 H(+) = thiamine phosphate + CO2 + diphosphate. The catalysed reaction is 4-methyl-5-(2-phosphooxyethyl)-thiazole + 4-amino-2-methyl-5-(diphosphooxymethyl)pyrimidine + H(+) = thiamine phosphate + diphosphate. It functions in the pathway cofactor biosynthesis; thiamine diphosphate biosynthesis; thiamine phosphate from 4-amino-2-methyl-5-diphosphomethylpyrimidine and 4-methyl-5-(2-phosphoethyl)-thiazole: step 1/1. Condenses 4-methyl-5-(beta-hydroxyethyl)thiazole monophosphate (THZ-P) and 2-methyl-4-amino-5-hydroxymethyl pyrimidine pyrophosphate (HMP-PP) to form thiamine monophosphate (TMP). The sequence is that of Thiamine-phosphate synthase from Prochlorococcus marinus (strain MIT 9303).